Reading from the N-terminus, the 312-residue chain is Malate dehydrogenase (312 aa).

NAD(+) is bound by residues 7–13 (GAAGGIG) and D34. Substrate is bound by residues R81 and R87. NAD(+) is bound by residues N94 and 117–119 (ITN). Substrate contacts are provided by N119 and R153. H177 functions as the Proton acceptor in the catalytic mechanism. Residue M227 coordinates NAD(+).

This sequence belongs to the LDH/MDH superfamily. MDH type 1 family. In terms of assembly, homodimer.

The enzyme catalyses (S)-malate + NAD(+) = oxaloacetate + NADH + H(+). Catalyzes the reversible oxidation of malate to oxaloacetate. The sequence is that of Malate dehydrogenase from Serratia proteamaculans (strain 568).